Reading from the N-terminus, the 125-residue chain is Aldolase FrzH (125 aa).

The catalysed reaction is (2S)-3-(4-methoxyphenyl)-2-[(3S)-3-(methylamino)-8-oxo-1-azaspiro[4.5]decan-1-yl]propanal = (1S,3S,6S,7S,8R)-7-hydroxy-6-[(4-methoxyphenyl)methyl]-3-(methylamino)-5-azatricyclo[6.3.1.0(1,5)]dodecan-9-one. It functions in the pathway secondary metabolite biosynthesis. Aldolase; part of the gene cluster that mediates the biosynthesis of the alkaloid (-)-FR901483, a potent immunosuppressant that shows efficacy in animal models and a probable inhibitor of purine nucleotide biosynthesis by targeting phosphoribosylpyrophosphate amidotransferase (PPAT). Within the pathway, FrzH is a new kind of aldolase with no similarities to known aldolases, and which catalyzes the intramolecular aldol condensation via formation of a C9-C3' bond to yield an aza-tricyclic product. The biosynthesis of (-)-FR901483 starts with the condensation of two L-tyrosines to yield (S,S)-dityrosyl-piperazine. This process occurs in 3 steps with the non-canonical nonribosomal peptide synthetase FrzA catalyzing the reduction of L-tyrosine into L-tyrosinal, the spontaneous condensation of 2 L-tyrosinal units, and the subsequent reduction by the NmrA-like family domain-containing oxidoreductase FrzB. The cytochrome P450 monooxygenase FrzC then performs coupling between N10 and C1' to morph the piperazine into a 1,4-diazabicyclo[3.2.1]octane spiro-fused to a 2,5-cyclohexadienone. The dienone portion is further reduced to cyclohexanone by the flavin-dependent reductase FrzD. The methyltranserases (MTs) FrzE and FrzF are then involved in the methylation at the C10' amine and the C4 phenolic oxygen, respectively. The order of the two MTs appear to be interchangeable. Cleavage of the C9-N10' bond by the dioxygenase FrzG then leads to formation of a conjugated iminium. In addition to the oxidation of C9, an additional dehydrogenation between C7 and C8 can occur to give a likely shunt product. The next biosynthetic step is the intramolecular aldol condensation catalyzed by the newly identified aldolase FrzH to yield an aza-tricyclic product with the formation of a C9-C3' bond. The short-chain dehydrogenase/reductase FrzI then produces dephospho-(-)-FR901483 that is phosphorylated at C4'-OH into (-)-FR901483 by the phosphotransferase FrzJ. The protein is Aldolase FrzH of Cladobotryum sp.